A 307-amino-acid polypeptide reads, in one-letter code: Ornithine carbamoyltransferase (307 aa).

Carbamoyl phosphate is bound by residues 56–59 (STRT), Gln-83, Arg-107, and 134–137 (HPCQ). L-ornithine-binding positions include Asn-165, Asp-223, and 227 to 228 (SM). Carbamoyl phosphate contacts are provided by residues 263–264 (CL) and Arg-291.

The protein belongs to the aspartate/ornithine carbamoyltransferase superfamily. OTCase family.

The protein localises to the cytoplasm. The enzyme catalyses carbamoyl phosphate + L-ornithine = L-citrulline + phosphate + H(+). The protein operates within amino-acid biosynthesis; L-arginine biosynthesis; L-arginine from L-ornithine and carbamoyl phosphate: step 1/3. In terms of biological role, reversibly catalyzes the transfer of the carbamoyl group from carbamoyl phosphate (CP) to the N(epsilon) atom of ornithine (ORN) to produce L-citrulline. This Cupriavidus metallidurans (strain ATCC 43123 / DSM 2839 / NBRC 102507 / CH34) (Ralstonia metallidurans) protein is Ornithine carbamoyltransferase.